A 795-amino-acid polypeptide reads, in one-letter code: Phenylalanine--tRNA ligase beta subunit (795 aa).

The tRNA-binding domain occupies 39–148 (AGTFNGVVVG…LDAPIGTDLR (110 aa)). Residues 401-476 (PKVNTVQLRR…RIYGYNSIPN (76 aa)) form the B5 domain. Mg(2+) is bound by residues aspartate 454, aspartate 460, glutamate 463, and glutamate 464. One can recognise an FDX-ACB domain in the interval 701 to 794 (SKFPANRRDL…VKQRFNAELR (94 aa)).

Belongs to the phenylalanyl-tRNA synthetase beta subunit family. Type 1 subfamily. In terms of assembly, tetramer of two alpha and two beta subunits. The cofactor is Mg(2+).

The protein resides in the cytoplasm. It carries out the reaction tRNA(Phe) + L-phenylalanine + ATP = L-phenylalanyl-tRNA(Phe) + AMP + diphosphate + H(+). The sequence is that of Phenylalanine--tRNA ligase beta subunit (pheT) from Haemophilus influenzae (strain ATCC 51907 / DSM 11121 / KW20 / Rd).